The following is a 968-amino-acid chain: RNA polymerase-associated protein RapA (968 aa).

A Helicase ATP-binding domain is found at 163–332 (EVGRRYAPRV…FARLRLLDPD (170 aa)). 176–183 (DEVGLGKT) contributes to the ATP binding site. A DEAH box motif is present at residues 278-281 (DEAH). The Helicase C-terminal domain occupies 491–655 (RVDWLIEFLK…EFAEELLNVL (165 aa)).

Belongs to the SNF2/RAD54 helicase family. RapA subfamily. As to quaternary structure, interacts with the RNAP. Has a higher affinity for the core RNAP than for the holoenzyme. Its ATPase activity is stimulated by binding to RNAP.

Functionally, transcription regulator that activates transcription by stimulating RNA polymerase (RNAP) recycling in case of stress conditions such as supercoiled DNA or high salt concentrations. Probably acts by releasing the RNAP, when it is trapped or immobilized on tightly supercoiled DNA. Does not activate transcription on linear DNA. Probably not involved in DNA repair. This is RNA polymerase-associated protein RapA from Shewanella oneidensis (strain ATCC 700550 / JCM 31522 / CIP 106686 / LMG 19005 / NCIMB 14063 / MR-1).